The following is a 379-amino-acid chain: Lipid-A-disaccharide synthase (379 aa).

Belongs to the LpxB family.

It carries out the reaction a lipid X + a UDP-2-N,3-O-bis[(3R)-3-hydroxyacyl]-alpha-D-glucosamine = a lipid A disaccharide + UDP + H(+). It participates in bacterial outer membrane biogenesis; LPS lipid A biosynthesis. In terms of biological role, condensation of UDP-2,3-diacylglucosamine and 2,3-diacylglucosamine-1-phosphate to form lipid A disaccharide, a precursor of lipid A, a phosphorylated glycolipid that anchors the lipopolysaccharide to the outer membrane of the cell. The polypeptide is Lipid-A-disaccharide synthase (Vibrio campbellii (strain ATCC BAA-1116)).